The sequence spans 278 residues: Potassium/proton antiporter CemA (278 aa).

The next 4 membrane-spanning stretches (helical) occupy residues 60 to 80, 155 to 175, 201 to 221, and 239 to 259; these read YLLLLITVPLIVNQISKSFVF, AMKNLLADVLAFVTFVYLIVT, FLIILFTDIFVGFHSTHGWEV, and IFLFIATFPVVLDTVFKYWIF.

It belongs to the CemA family.

It is found in the plastid. Its subcellular location is the chloroplast inner membrane. It catalyses the reaction K(+)(in) + H(+)(out) = K(+)(out) + H(+)(in). In terms of biological role, contributes to K(+)/H(+) antiport activity by supporting proton efflux to control proton extrusion and homeostasis in chloroplasts in a light-dependent manner to modulate photosynthesis. Prevents excessive induction of non-photochemical quenching (NPQ) under continuous-light conditions. Indirectly promotes efficient inorganic carbon uptake into chloroplasts. This Rhodomonas salina (Cryptomonas salina) protein is Potassium/proton antiporter CemA.